Reading from the N-terminus, the 85-residue chain is UPF0335 protein WP0746 (85 aa).

This sequence belongs to the UPF0335 family.

This chain is UPF0335 protein WP0746, found in Wolbachia pipientis subsp. Culex pipiens (strain wPip).